The sequence spans 250 residues: ATP synthase subunit a (250 aa).

6 helical membrane-spanning segments follow: residues 26–46 (FTNA…FLYL), 84–104 (FFPM…LGMV), 114–134 (IIVT…YGFY), 143–163 (LFVP…IEII), 193–213 (FVAS…LPLI), and 216–236 (VALT…FAVL).

It belongs to the ATPase A chain family. As to quaternary structure, F-type ATPases have 2 components, CF(1) - the catalytic core - and CF(0) - the membrane proton channel. CF(1) has five subunits: alpha(3), beta(3), gamma(1), delta(1), epsilon(1). CF(0) has three main subunits: a(1), b(2) and c(9-12). The alpha and beta chains form an alternating ring which encloses part of the gamma chain. CF(1) is attached to CF(0) by a central stalk formed by the gamma and epsilon chains, while a peripheral stalk is formed by the delta and b chains.

Its subcellular location is the cell inner membrane. Key component of the proton channel; it plays a direct role in the translocation of protons across the membrane. The chain is ATP synthase subunit a from Rhizobium meliloti (strain 1021) (Ensifer meliloti).